Reading from the N-terminus, the 299-residue chain is Oxygen-dependent coproporphyrinogen-III oxidase (299 aa).

Serine 92 lines the substrate pocket. The a divalent metal cation site is built by histidine 96 and histidine 106. The active-site Proton donor is histidine 106. 108-110 is a binding site for substrate; it reads NVR. Histidine 145 and histidine 175 together coordinate a divalent metal cation. Residues 240–275 are important for dimerization; the sequence is YVEFNLVWDRGTLFGLQTGGRTESILMSMPPLVRWE. Residue 258–260 coordinates substrate; it reads GGR.

The protein belongs to the aerobic coproporphyrinogen-III oxidase family. As to quaternary structure, homodimer. A divalent metal cation serves as cofactor.

It localises to the cytoplasm. The catalysed reaction is coproporphyrinogen III + O2 + 2 H(+) = protoporphyrinogen IX + 2 CO2 + 2 H2O. It participates in porphyrin-containing compound metabolism; protoporphyrin-IX biosynthesis; protoporphyrinogen-IX from coproporphyrinogen-III (O2 route): step 1/1. In terms of biological role, involved in the heme biosynthesis. Catalyzes the aerobic oxidative decarboxylation of propionate groups of rings A and B of coproporphyrinogen-III to yield the vinyl groups in protoporphyrinogen-IX. The protein is Oxygen-dependent coproporphyrinogen-III oxidase of Shigella dysenteriae serotype 1 (strain Sd197).